A 240-amino-acid chain; its full sequence is CRISPR-associated protein Cas5 3 (240 aa).

Belongs to the CRISPR-associated protein Cas5 family. Subtype I-A/Apern subfamily. As to quaternary structure, part of the aCascade ribonucleoprotein complex.

In terms of biological role, CRISPR (clustered regularly interspaced short palindromic repeat) is an adaptive immune system that provides protection against mobile genetic elements (viruses, transposable elements and conjugative plasmids). CRISPR clusters contain spacers, sequences complementary to antecedent mobile elements, and target invading nucleic acids. CRISPR clusters are transcribed and processed into CRISPR RNA (crRNA). This is CRISPR-associated protein Cas5 3 (cas5c) from Saccharolobus solfataricus (strain ATCC 35092 / DSM 1617 / JCM 11322 / P2) (Sulfolobus solfataricus).